The following is a 122-amino-acid chain: Large ribosomal subunit protein uL14 (122 aa).

It belongs to the universal ribosomal protein uL14 family. In terms of assembly, part of the 50S ribosomal subunit. Forms a cluster with proteins L3 and L19. In the 70S ribosome, L14 and L19 interact and together make contacts with the 16S rRNA in bridges B5 and B8.

In terms of biological role, binds to 23S rRNA. Forms part of two intersubunit bridges in the 70S ribosome. The polypeptide is Large ribosomal subunit protein uL14 (Chloroherpeton thalassium (strain ATCC 35110 / GB-78)).